We begin with the raw amino-acid sequence, 1360 residues long: Ubiquitin carboxyl-terminal hydrolase 19 (1360 aa).

The interval 1–46 (MSAGASATGPRRGPPGLEEATSKKKQKDRANLESKDGDARRVSLPR) is disordered. The Cytoplasmic portion of the chain corresponds to 1–1333 (MSAGASATGP…TTPDEGCLRY (1333 aa)). The segment covering 28–46 (DRANLESKDGDARRVSLPR) has biased composition (basic and acidic residues). The region spanning 51-140 (KDELLLDWRQ…VPLLTWPSLL (90 aa)) is the CS 1 domain. Positions 163–239 (PIALEPGSEP…APSFLSDSAT (77 aa)) are disordered. A compositionally biased stretch (basic and acidic residues) spans 170-181 (SEPRRAKQEARN). The segment covering 189-199 (GEVGSGAGPGT) has biased composition (gly residues). Serine 220 is subject to Phosphoserine. Positions 322 to 424 (LAFVKNDSYE…RQSQRWGGLE (103 aa)) constitute a CS 2 domain. Positions 432-482 (VGGAKVAVPTGPTPLDSTPPGGGPHPLTGQEEARAVEKEKPKARSEDSGLD) are disordered. The segment covering 462 to 478 (EEARAVEKEKPKARSED) has biased composition (basic and acidic residues). The region spanning 539 to 1256 (TGLVNLGNTC…YAYVLFYRRR (718 aa)) is the USP domain. Cysteine 548 functions as the Nucleophile in the catalytic mechanism. Zn(2+) is bound by residues cysteine 833, cysteine 836, cysteine 850, cysteine 853, cysteine 859, cysteine 863, histidine 871, and cysteine 875. Residues 833–875 (CAACQRKQQSEEEKLKRCTRCYRVGYCNQFCQKTHWPDHKGLC) form an MYND-type zinc finger. The disordered stretch occupies residues 965–988 (DTGAHRVWPPADRGPVPSTSGLSS). Histidine 1207 (proton acceptor) is an active-site residue. Residues 1259-1274 (PVERPPRASHSEHHPD) are compositionally biased toward basic and acidic residues. Residues 1259–1281 (PVERPPRASHSEHHPDLGPAAEA) form a disordered region. The helical transmembrane segment at 1334–1354 (FVLGTVAALVALVLNVFYPLV) threads the bilayer. The Lumenal portion of the chain corresponds to 1355–1360 (SQSRWR).

Interacts with RNF123. Interacts with BIRC2/c-IAP1, BIRC3/c-IAP2 and XIAP/BIRC4. Interacts with HIF1A (via N-terminus).

It is found in the endoplasmic reticulum membrane. The catalysed reaction is Thiol-dependent hydrolysis of ester, thioester, amide, peptide and isopeptide bonds formed by the C-terminal Gly of ubiquitin (a 76-residue protein attached to proteins as an intracellular targeting signal).. In terms of biological role, deubiquitinating enzyme that regulates the degradation of various proteins by removing ubiquitin moieties, thereby preventing their proteasomal degradation. Stabilizes RNF123, which promotes CDKN1B degradation and contributes to cell proliferation. Decreases the levels of ubiquitinated proteins during skeletal muscle formation and acts to repress myogenesis. Modulates transcription of major myofibrillar proteins. Also involved in turnover of endoplasmic-reticulum-associated degradation (ERAD) substrates. Mechanistically, deubiquitinates and thereby stabilizes several E3 ligases involved in the ERAD pathway including SYVN1 or MARCHF6. Regulates the stability of other E3 ligases including BIRC2/c-IAP1 and BIRC3/c-IAP2 by preventing their ubiquitination. Required for cells to mount an appropriate response to hypoxia by rescuing HIF1A from degradation in a non-catalytic manner and by mediating the deubiquitination of FUNDC1. Attenuates mitochondrial damage and ferroptosis by targeting and stabilizing NADPH oxidase 4/NOX4. Negatively regulates TNF-alpha- and IL-1beta-triggered NF-kappa-B activation by hydrolyzing 'Lys-27'- and 'Lys-63'-linked polyubiquitin chains from MAP3K7. Modulates also the protein level and aggregation of polyQ-expanded huntingtin/HTT through HSP90AA1. The sequence is that of Ubiquitin carboxyl-terminal hydrolase 19 (Usp19) from Mus musculus (Mouse).